Consider the following 992-residue polypeptide: Protein translocase subunit SecA (992 aa).

Residues Gln86, 104-108 (GEGKT), and Asp535 contribute to the ATP site. The interval 885–910 (IAGGSSEVEQTRKPQRRTVQQIGRND) is disordered. 4 residues coordinate Zn(2+): Cys912, Cys914, Cys923, and His924. The segment at 965–992 (IDNGTLPAASPKTPRGRQPQAVPRGKKR) is disordered.

This sequence belongs to the SecA family. As to quaternary structure, monomer and homodimer. Part of the essential Sec protein translocation apparatus which comprises SecA, SecYEG and auxiliary proteins SecDF. Other proteins may also be involved. Zn(2+) serves as cofactor.

Its subcellular location is the cell membrane. The protein localises to the cytoplasm. It catalyses the reaction ATP + H2O + cellular proteinSide 1 = ADP + phosphate + cellular proteinSide 2.. Its function is as follows. Part of the Sec protein translocase complex. Interacts with the SecYEG preprotein conducting channel. Has a central role in coupling the hydrolysis of ATP to the transfer of proteins into and across the cell membrane, serving as an ATP-driven molecular motor driving the stepwise translocation of polypeptide chains across the membrane. The protein is Protein translocase subunit SecA of Chloroflexus aggregans (strain MD-66 / DSM 9485).